The sequence spans 81 residues: Photosystem I iron-sulfur center (81 aa).

2 4Fe-4S ferredoxin-type domains span residues 2–31 (SHKIKIYDTCIGCTQCVRACPTDVLEMIPW) and 39–68 (IASAPRTEDCVGCKRCESACPTDFLSVRVY). Residues cysteine 11, cysteine 14, cysteine 17, cysteine 21, cysteine 48, cysteine 51, cysteine 54, and cysteine 58 each coordinate [4Fe-4S] cluster.

The eukaryotic PSI reaction center is composed of at least 11 subunits. [4Fe-4S] cluster is required as a cofactor.

The protein resides in the plastid. It is found in the chloroplast thylakoid membrane. It carries out the reaction reduced [plastocyanin] + hnu + oxidized [2Fe-2S]-[ferredoxin] = oxidized [plastocyanin] + reduced [2Fe-2S]-[ferredoxin]. Functionally, apoprotein for the two 4Fe-4S centers FA and FB of photosystem I (PSI); essential for photochemical activity. FB is the terminal electron acceptor of PSI, donating electrons to ferredoxin. The C-terminus interacts with PsaA/B/D and helps assemble the protein into the PSI complex. Required for binding of PsaD and PsaE to PSI. PSI is a plastocyanin-ferredoxin oxidoreductase, converting photonic excitation into a charge separation, which transfers an electron from the donor P700 chlorophyll pair to the spectroscopically characterized acceptors A0, A1, FX, FA and FB in turn. This Chara vulgaris (Common stonewort) protein is Photosystem I iron-sulfur center.